The following is a 366-amino-acid chain: Outer membrane protein IIIA (366 aa).

An N-terminal signal peptide occupies residues Met1 to Ala22.

This sequence belongs to the alphaproteobacteria porin family. In terms of assembly, forms calcium-stabilized oligomers. Post-translationally, attached covalently to peptidoglycan.

It is found in the cell outer membrane. In terms of biological role, may act as an outer membrane pore. The sequence is that of Outer membrane protein IIIA (ropA) from Rhizobium leguminosarum bv. viciae.